A 275-amino-acid polypeptide reads, in one-letter code: NH(3)-dependent NAD(+) synthetase (275 aa).

An ATP-binding site is contributed by 50-57; sequence GISGGVDS. Aspartate 56 lines the Mg(2+) pocket. Arginine 147 is a deamido-NAD(+) binding site. Position 167 (threonine 167) interacts with ATP. Glutamate 172 serves as a coordination point for Mg(2+). Residues lysine 180 and aspartate 187 each coordinate deamido-NAD(+). Residues lysine 196 and threonine 218 each contribute to the ATP site. 267 to 268 lines the deamido-NAD(+) pocket; the sequence is HK.

It belongs to the NAD synthetase family. In terms of assembly, homodimer.

The enzyme catalyses deamido-NAD(+) + NH4(+) + ATP = AMP + diphosphate + NAD(+) + H(+). The protein operates within cofactor biosynthesis; NAD(+) biosynthesis; NAD(+) from deamido-NAD(+) (ammonia route): step 1/1. Its function is as follows. Catalyzes the ATP-dependent amidation of deamido-NAD to form NAD. Uses ammonia as a nitrogen source. The polypeptide is NH(3)-dependent NAD(+) synthetase (Pseudomonas fluorescens (strain Pf0-1)).